A 253-amino-acid polypeptide reads, in one-letter code: tRNA pseudouridine synthase A (253 aa).

D53 acts as the Nucleophile in catalysis. Residue Y111 coordinates substrate.

This sequence belongs to the tRNA pseudouridine synthase TruA family. In terms of assembly, homodimer.

It catalyses the reaction uridine(38/39/40) in tRNA = pseudouridine(38/39/40) in tRNA. Its function is as follows. Formation of pseudouridine at positions 38, 39 and 40 in the anticodon stem and loop of transfer RNAs. The polypeptide is tRNA pseudouridine synthase A (Chlorobium luteolum (strain DSM 273 / BCRC 81028 / 2530) (Pelodictyon luteolum)).